Consider the following 34-residue polypeptide: Photosystem II reaction center protein M (34 aa).

A helical transmembrane segment spans residues 5 to 25 (ILAFIATALFILVPTAFLLII).

This sequence belongs to the PsbM family. In terms of assembly, PSII is composed of 1 copy each of membrane proteins PsbA, PsbB, PsbC, PsbD, PsbE, PsbF, PsbH, PsbI, PsbJ, PsbK, PsbL, PsbM, PsbT, PsbX, PsbY, PsbZ, Psb30/Ycf12, at least 3 peripheral proteins of the oxygen-evolving complex and a large number of cofactors. It forms dimeric complexes.

The protein resides in the plastid. It localises to the chloroplast thylakoid membrane. Functionally, one of the components of the core complex of photosystem II (PSII). PSII is a light-driven water:plastoquinone oxidoreductase that uses light energy to abstract electrons from H(2)O, generating O(2) and a proton gradient subsequently used for ATP formation. It consists of a core antenna complex that captures photons, and an electron transfer chain that converts photonic excitation into a charge separation. This subunit is found at the monomer-monomer interface. The protein is Photosystem II reaction center protein M of Coffea arabica (Arabian coffee).